The sequence spans 317 residues: Beta-ketoacyl-[acyl-carrier-protein] synthase III (317 aa).

Residues C112 and H244 contribute to the active site. The segment at 245–249 (QANLR) is ACP-binding. The active site involves N274.

The protein belongs to the thiolase-like superfamily. FabH family. Homodimer.

Its subcellular location is the cytoplasm. The enzyme catalyses malonyl-[ACP] + acetyl-CoA + H(+) = 3-oxobutanoyl-[ACP] + CO2 + CoA. Its pathway is lipid metabolism; fatty acid biosynthesis. Catalyzes the condensation reaction of fatty acid synthesis by the addition to an acyl acceptor of two carbons from malonyl-ACP. Catalyzes the first condensation reaction which initiates fatty acid synthesis and may therefore play a role in governing the total rate of fatty acid production. Possesses both acetoacetyl-ACP synthase and acetyl transacylase activities. Its substrate specificity determines the biosynthesis of branched-chain and/or straight-chain of fatty acids. The polypeptide is Beta-ketoacyl-[acyl-carrier-protein] synthase III (Aliivibrio fischeri (strain ATCC 700601 / ES114) (Vibrio fischeri)).